A 1375-amino-acid chain; its full sequence is Patatin-like phospholipase domain-containing protein 6 (1375 aa).

The segment at 1-20 is disordered; it reads MEAPLQTGMMGTSSHGLATN. The Lumenal segment spans residues 1–59; the sequence is MEAPLQTGMMGTSSHGLATNSSGAKVAERDGFQDVLAPGEGSAGRICGAQPVPFVPQVL. The segment covering 9–20 has biased composition (polar residues); sequence MMGTSSHGLATN. Asn20 carries an N-linked (GlcNAc...) asparagine glycan. Residues 60 to 80 traverse the membrane as a helical segment; the sequence is GVMIGAGVAVVVTAVLILLVV. Residues 81–1375 lie on the Cytoplasmic side of the membrane; it reads RRLRVPKTPA…QEPPGSATDA (1295 aa). A nucleoside 3',5'-cyclic phosphate is bound at residue 195-322; that stretch reads VLGHFEKPLF…VRVVQIIMVR (128 aa). 2 disordered regions span residues 352-436 and 449-472; these read FPSP…RSDF and LQEE…PREQ. Ser354 is subject to Phosphoserine. The span at 359-376 shows a compositional bias: polar residues; that stretch reads TRTSPVRGSKRMVSTSAT. The residue at position 361 (Thr361) is a Phosphothreonine. Phosphoserine occurs at positions 362 and 372. Residues 384-398 show a composition bias toward pro residues; it reads GRPPDPTGAPLPGPT. A Phosphoserine modification is found at Ser420. Thr464 carries the post-translational modification Phosphothreonine. A nucleoside 3',5'-cyclic phosphate contacts are provided by residues 511-633 and 629-749; these read ELAK…VAAR and TVAA…LSQK. The PNPLA domain maps to 981–1147; it reads LVLGGGGARG…INNLPADIAR (167 aa). A GXGXXG motif is present at residues 985 to 990; sequence GGGARG. The GXSXG motif lies at 1012 to 1016; it reads GTSIG. Ser1014 acts as the Nucleophile in catalysis. Residue Asp1134 is the Proton acceptor of the active site. A DGA/G motif is present at residues 1134–1136; sequence DGG. Residues 1306 to 1375 are disordered; sequence SYVSDGCADG…QEPPGSATDA (70 aa). The segment covering 1313–1329 has biased composition (acidic residues); that stretch reads ADGEESDCLTEYEEDAG.

The protein belongs to the NTE family. Glycosylated. Expressed in brain, placenta, kidney, neuron and skeletal muscle. Expressed in the developing eye, pituitary and brain.

It is found in the endoplasmic reticulum membrane. The enzyme catalyses a 1-acyl-sn-glycero-3-phosphocholine + H2O = sn-glycerol 3-phosphocholine + a fatty acid + H(+). It carries out the reaction 1-(9Z-octadecenoyl)-sn-glycero-3-phosphocholine + H2O = sn-glycerol 3-phosphocholine + (9Z)-octadecenoate + H(+). The catalysed reaction is 1-hexadecanoylglycerol + H2O = glycerol + hexadecanoate + H(+). It catalyses the reaction 2-hexadecanoylglycerol + H2O = glycerol + hexadecanoate + H(+). The enzyme catalyses 1-(9Z-octadecenoyl)-glycerol + H2O = glycerol + (9Z)-octadecenoate + H(+). It carries out the reaction 2-(9Z-octadecenoyl)-glycerol + H2O = glycerol + (9Z)-octadecenoate + H(+). The catalysed reaction is 2-(5Z,8Z,11Z,14Z-eicosatetraenoyl)-glycerol + H2O = glycerol + (5Z,8Z,11Z,14Z)-eicosatetraenoate + H(+). It catalyses the reaction 1-hexadecanoyl-sn-glycero-3-phosphate + H2O = sn-glycerol 3-phosphate + hexadecanoate + H(+). The enzyme catalyses 1-hexadecanoyl-sn-glycero-3-phosphocholine + H2O = sn-glycerol 3-phosphocholine + hexadecanoate + H(+). Its activity is regulated as follows. Inhibited by a series a OPs such as mipafox (MPX), phenyl saligenin phosphate (PSP), phenyl dipentyl phosphinate (PDPP), diisopropyl fluorophosphate and paraoxon. Its function is as follows. Phospholipase B that deacylates intracellular phosphatidylcholine (PtdCho), generating glycerophosphocholine (GroPtdCho). This deacylation occurs at both sn-2 and sn-1 positions of PtdCho. Catalyzes the hydrolysis of several naturally occurring membrane-associated lipids. Hydrolyzes lysophospholipids and monoacylglycerols, preferring the 1-acyl to the 2-acyl isomer. Does not catalyze hydrolysis of di- or triacylglycerols or fatty acid amides. This Homo sapiens (Human) protein is Patatin-like phospholipase domain-containing protein 6.